Here is a 317-residue protein sequence, read N- to C-terminus: Ribosomal protein L11 methyltransferase (317 aa).

S-adenosyl-L-methionine-binding residues include Thr158, Gly179, Asp201, and Asn244.

Belongs to the methyltransferase superfamily. PrmA family.

Its subcellular location is the cytoplasm. It catalyses the reaction L-lysyl-[protein] + 3 S-adenosyl-L-methionine = N(6),N(6),N(6)-trimethyl-L-lysyl-[protein] + 3 S-adenosyl-L-homocysteine + 3 H(+). Functionally, methylates ribosomal protein L11. The sequence is that of Ribosomal protein L11 methyltransferase from Streptococcus pyogenes serotype M28 (strain MGAS6180).